A 689-amino-acid polypeptide reads, in one-letter code: Glycine--tRNA ligase beta subunit (689 aa).

This sequence belongs to the class-II aminoacyl-tRNA synthetase family. As to quaternary structure, tetramer of two alpha and two beta subunits.

The protein localises to the cytoplasm. The enzyme catalyses tRNA(Gly) + glycine + ATP = glycyl-tRNA(Gly) + AMP + diphosphate. The polypeptide is Glycine--tRNA ligase beta subunit (Shewanella sediminis (strain HAW-EB3)).